The chain runs to 110 residues: ATP-dependent Clp protease adapter protein ClpS (110 aa).

Belongs to the ClpS family. As to quaternary structure, binds to the N-terminal domain of the chaperone ClpA.

Involved in the modulation of the specificity of the ClpAP-mediated ATP-dependent protein degradation. The polypeptide is ATP-dependent Clp protease adapter protein ClpS (Bartonella henselae (strain ATCC 49882 / DSM 28221 / CCUG 30454 / Houston 1) (Rochalimaea henselae)).